Here is a 418-residue protein sequence, read N- to C-terminus: Serine hydroxymethyltransferase (418 aa).

Residues Leu121 and 125-127 (GHL) contribute to the (6S)-5,6,7,8-tetrahydrofolate site. Lys230 is modified (N6-(pyridoxal phosphate)lysine). Residue 355–357 (SPF) coordinates (6S)-5,6,7,8-tetrahydrofolate.

It belongs to the SHMT family. Homodimer. Pyridoxal 5'-phosphate is required as a cofactor.

It localises to the cytoplasm. The catalysed reaction is (6R)-5,10-methylene-5,6,7,8-tetrahydrofolate + glycine + H2O = (6S)-5,6,7,8-tetrahydrofolate + L-serine. The protein operates within one-carbon metabolism; tetrahydrofolate interconversion. Its pathway is amino-acid biosynthesis; glycine biosynthesis; glycine from L-serine: step 1/1. In terms of biological role, catalyzes the reversible interconversion of serine and glycine with tetrahydrofolate (THF) serving as the one-carbon carrier. This reaction serves as the major source of one-carbon groups required for the biosynthesis of purines, thymidylate, methionine, and other important biomolecules. Also exhibits THF-independent aldolase activity toward beta-hydroxyamino acids, producing glycine and aldehydes, via a retro-aldol mechanism. This chain is Serine hydroxymethyltransferase, found in Streptococcus pyogenes serotype M3 (strain ATCC BAA-595 / MGAS315).